The chain runs to 267 residues: Malonyl-[acyl-carrier protein] O-methyltransferase (267 aa).

The protein belongs to the methyltransferase superfamily.

The catalysed reaction is malonyl-[ACP] + S-adenosyl-L-methionine = malonyl-[ACP] methyl ester + S-adenosyl-L-homocysteine. Its pathway is cofactor biosynthesis; biotin biosynthesis. Its function is as follows. Converts the free carboxyl group of a malonyl-thioester to its methyl ester by transfer of a methyl group from S-adenosyl-L-methionine (SAM). It allows to synthesize pimeloyl-ACP via the fatty acid synthetic pathway. This Yersinia pestis protein is Malonyl-[acyl-carrier protein] O-methyltransferase.